The primary structure comprises 748 residues: Catalase-peroxidase (748 aa).

A cross-link (tryptophyl-tyrosyl-methioninium (Trp-Tyr) (with M-268)) is located at residues Trp-91–Tyr-242. His-92 functions as the Proton acceptor in the catalytic mechanism. Residues Asp-194–Ala-223 are disordered. The tryptophyl-tyrosyl-methioninium (Tyr-Met) (with W-91) cross-link spans Tyr-242–Met-268. His-283 provides a ligand contact to heme b. Residues Thr-288 to Gly-310 form a disordered region. Residues Gly-290 to Pro-301 are compositionally biased toward basic and acidic residues.

Belongs to the peroxidase family. Peroxidase/catalase subfamily. In terms of assembly, homodimer or homotetramer. It depends on heme b as a cofactor. In terms of processing, formation of the three residue Trp-Tyr-Met cross-link is important for the catalase, but not the peroxidase activity of the enzyme.

It catalyses the reaction H2O2 + AH2 = A + 2 H2O. It carries out the reaction 2 H2O2 = O2 + 2 H2O. Its function is as follows. Bifunctional enzyme with both catalase and broad-spectrum peroxidase activity. The protein is Catalase-peroxidase of Herbaspirillum seropedicae.